We begin with the raw amino-acid sequence, 219 residues long: Transmembrane protein 179B (219 aa).

4 consecutive transmembrane segments (helical) span residues proline 6–alanine 26, isoleucine 69–phenylalanine 89, leucine 105–glycine 125, and alanine 167–isoleucine 187. The disordered stretch occupies residues isoleucine 195–proline 219.

Belongs to the TMEM179 family.

It localises to the membrane. This Danio rerio (Zebrafish) protein is Transmembrane protein 179B (tmem179b).